Consider the following 313-residue polypeptide: ADP-L-glycero-D-manno-heptose-6-epimerase (313 aa).

Residues 10–11 (MI), 31–32 (DN), lysine 38, lysine 53, 75–79 (EGACS), and asparagine 92 each bind NADP(+). Tyrosine 139 functions as the Proton acceptor in the catalytic mechanism. Lysine 143 contacts NADP(+). Residue asparagine 174 coordinates substrate. Positions 175 and 183 each coordinate NADP(+). The active-site Proton acceptor is lysine 183. Residues serine 185, histidine 192, 206–209 (FEGS), arginine 214, and tyrosine 277 each bind substrate.

It belongs to the NAD(P)-dependent epimerase/dehydratase family. HldD subfamily. In terms of assembly, homopentamer. It depends on NADP(+) as a cofactor.

It carries out the reaction ADP-D-glycero-beta-D-manno-heptose = ADP-L-glycero-beta-D-manno-heptose. Its pathway is nucleotide-sugar biosynthesis; ADP-L-glycero-beta-D-manno-heptose biosynthesis; ADP-L-glycero-beta-D-manno-heptose from D-glycero-beta-D-manno-heptose 7-phosphate: step 4/4. Catalyzes the interconversion between ADP-D-glycero-beta-D-manno-heptose and ADP-L-glycero-beta-D-manno-heptose via an epimerization at carbon 6 of the heptose. This Aliivibrio fischeri (strain MJ11) (Vibrio fischeri) protein is ADP-L-glycero-D-manno-heptose-6-epimerase.